The following is a 91-amino-acid chain: Large ribosomal subunit protein bL27 (91 aa).

The protein belongs to the bacterial ribosomal protein bL27 family.

This chain is Large ribosomal subunit protein bL27, found in Deinococcus deserti (strain DSM 17065 / CIP 109153 / LMG 22923 / VCD115).